An 805-amino-acid polypeptide reads, in one-letter code: Rho GTPase-activating protein 42 (805 aa).

The BAR domain maps to Glu-7–Ala-262. A coiled-coil region spans residues Lys-225–Ala-262. A PH domain is found at Gln-265–Pro-374. The Rho-GAP domain maps to Tyr-376 to Phe-572. 3 disordered regions span residues Pro-576 to Ala-600, Ser-625 to Leu-725, and Val-765 to Val-805. A compositionally biased stretch (low complexity) spans Asp-626 to Ser-654. Positions Leu-670–Ser-693 are enriched in polar residues. Residues Ser-694–Gly-704 are compositionally biased toward basic and acidic residues. A compositionally biased stretch (polar residues) spans Leu-710 to Ala-721. A compositionally biased stretch (basic and acidic residues) spans Pro-782–Ser-793.

Functionally, may influence blood pressure by functioning as a GTPase-activating protein in vascular smooth muscle. The protein is Rho GTPase-activating protein 42 of Danio rerio (Zebrafish).